The following is a 345-amino-acid chain: Quinolinate synthase (345 aa).

2 residues coordinate iminosuccinate: His-69 and Ser-87. Cys-132 contributes to the [4Fe-4S] cluster binding site. Iminosuccinate contacts are provided by residues 158-160 (YVN) and Ser-175. A [4Fe-4S] cluster-binding site is contributed by Cys-217. Iminosuccinate-binding positions include 243–245 (HPE) and Thr-260. Cys-303 lines the [4Fe-4S] cluster pocket.

This sequence belongs to the quinolinate synthase family. Type 2 subfamily. [4Fe-4S] cluster is required as a cofactor.

The protein localises to the cytoplasm. The enzyme catalyses iminosuccinate + dihydroxyacetone phosphate = quinolinate + phosphate + 2 H2O + H(+). It participates in cofactor biosynthesis; NAD(+) biosynthesis; quinolinate from iminoaspartate: step 1/1. Catalyzes the condensation of iminoaspartate with dihydroxyacetone phosphate to form quinolinate. The protein is Quinolinate synthase of Agrobacterium fabrum (strain C58 / ATCC 33970) (Agrobacterium tumefaciens (strain C58)).